The following is a 433-amino-acid chain: Alpha-(1,3)-fucosyltransferase 4 (433 aa).

The segment at 1–20 (MAPAGRKLQHESRCRPSRPV) is disordered. The Cytoplasmic portion of the chain corresponds to 1-54 (MAPAGRKLQHESRCRPSRPVDAWRAAATTRGRCMGTPGARRTARRGGWGLPRTS). The chain crosses the membrane as a helical; Signal-anchor for type II membrane protein span at residues 55-74 (SGLAAAGLLCTALTACLCWG). The Lumenal segment spans residues 75–433 (QLPPLPWASP…IHNLADWFQR (359 aa)). N-linked (GlcNAc...) asparagine glycans are attached at residues N117 and N218.

It belongs to the glycosyltransferase 10 family. In terms of tissue distribution, in adult, highest expression in spleen, testis, brain, lung, kidney and skeletal muscle and to a lesser extent in liver and heart.

It localises to the golgi apparatus. It is found in the golgi stack membrane. The catalysed reaction is a beta-D-galactosyl-(1-&gt;4)-N-acetyl-beta-D-glucosaminyl derivative + GDP-beta-L-fucose = a beta-D-galactosyl-(1-&gt;4)-[alpha-L-fucosyl-(1-&gt;3)]-N-acetyl-beta-D-glucosaminyl derivative + GDP + H(+). The enzyme catalyses an N-acetyl-alpha-neuraminyl-(2-&gt;3)-beta-D-galactosyl-(1-&gt;4)-N-acetyl-beta-D-glucosaminyl derivative + GDP-beta-L-fucose = an alpha-Neu5Ac-(2-&gt;3)-beta-D-Gal-(1-&gt;4)-[alpha-L-Fuc-(1-&gt;3)]-beta-D-GlcNAc derivative + GDP + H(+). It carries out the reaction an alpha-Neu5Ac-(2-&gt;3)-beta-D-Gal-(1-&gt;4)-beta-D-GlcNAc-(1-&gt;3)-beta-D-Gal-(1-&gt;4)-beta-D-GlcNAc derivative + GDP-beta-L-fucose = an alpha-Neu5Ac-(2-&gt;3)-beta-D-Gal-(1-&gt;4)-beta-D-GlcNAc-(1-&gt;3)-beta-D-Gal-(1-&gt;4)-[alpha-L-Fuc-(1-&gt;3)]-beta-D-GlcNAc derivative + GDP + H(+). It catalyses the reaction an alpha-Neu5Ac-(2-&gt;3)-beta-D-Gal-(1-&gt;4)-beta-D-GlcNAc6S derivative + GDP-beta-L-fucose = an alpha-Neu5Ac-(2-&gt;3)-beta-D-Gal-(1-&gt;4)-[alpha-L-Fuc-(1-&gt;3)]-beta-D-GlcNAc6S derivative + GDP + H(+). It participates in protein modification; protein glycosylation. In terms of biological role, catalyzes alpha(1-&gt;3) linkage of fucosyl moiety transferred from GDP-beta-L-fucose to N-acetyl glucosamine (GlcNAc) within type 2 lactosamine (LacNAc, Gal-beta(1-&gt;4)GlcNAc) glycan attached to N- or O-linked glycoproteins. Robustly fucosylates nonsialylated distal LacNAc unit of the polylactosamine chain to form Lewis X antigen (CD15), a glycan determinant known to mediate important cellular functions in development and immunity. Fucosylates with lower efficiency sialylated LacNAc acceptors to form sialyl Lewis X and 6-sulfo sialyl Lewis X determinants that serve as recognition epitopes for C-type lectins. Together with FUT7 contributes to SELE, SELL and SELP selectin ligand biosynthesis and selectin-dependent lymphocyte homing, leukocyte migration and blood leukocyte homeostasis. In a cell type specific manner, may also fucosylate the internal LacNAc unit of the polylactosamine chain to form VIM-2 antigen that serves as recognition epitope for SELE. The chain is Alpha-(1,3)-fucosyltransferase 4 (Fut4) from Rattus norvegicus (Rat).